Consider the following 341-residue polypeptide: Very-long-chain 3-oxoacyl-CoA reductase (341 aa).

Residues 15–35 (VVTAFSVIGIVFTILKFTSFA) traverse the membrane as a helical segment. Residues Val61, Asp115, Asn142, Lys177, Tyr216, Lys220, Val249, and Ser251 each coordinate NADP(+). Tyr216 (proton donor) is an active-site residue. Catalysis depends on Lys220, which acts as the Lowers pKa of active site Tyr.

This sequence belongs to the short-chain dehydrogenases/reductases (SDR) family.

The protein localises to the endoplasmic reticulum membrane. It carries out the reaction a very-long-chain (3R)-3-hydroxyacyl-CoA + NADP(+) = a very-long-chain 3-oxoacyl-CoA + NADPH + H(+). The protein operates within lipid metabolism; fatty acid biosynthesis. Its function is as follows. Component of the microsomal membrane bound fatty acid elongation system, which produces the 26-carbon very long-chain fatty acids (VLCFA) from palmitate. Catalyzes the reduction of the 3-ketoacyl-CoA intermediate that is formed in each cycle of fatty acid elongation. VLCFAs serve as precursors for ceramide and sphingolipids. This is Very-long-chain 3-oxoacyl-CoA reductase from Schizosaccharomyces pombe (strain 972 / ATCC 24843) (Fission yeast).